Here is a 725-residue protein sequence, read N- to C-terminus: MNLSLSGRKIAMTRVSAETQYITPIGSPTLDELLKDCDSFRKGDSGDGVKSDDPAHHIIDVEALYVKPVPYVLNFNNLQYDVTLRRRFGFSRQNGVKTLLDDVSGEASDGDILAVLGASGAGKSTLIDALAGRVAEGSLRGSVTLNGEKVLQSRLLKVISAYVMQDDLLFPMLTVKETLMFASEFRLPRSLSKSKKMERVEALIDQLGLRNAANTVIGDEGHRGVSGGERRRVSIGIDIIHDPIVLFLDEPTSGLDSTNAFMVVQVLKRIAQSGSIVIMSIHQPSARIVELLDRLIILSRGKSVFNGSPASLPGFFSDFGRPIPEKENISEFALDLVRELEGSNEGTKALVDFNEKWQQNKISLIQSAPQTNKLDQDRSLSLKEAINASVSRGKLVSGSSRSNPTSMETVSSYANPSLFETFILAKRYMKNWIRMPELVGTRIATVMVTGCLLATVYWKLDHTPRGAQERLTLFAFVVPTMFYCCLDNVPVFIQERYIFLRETTHNAYRTSSYVISHSLVSLPQLLAPSLVFSAITFWTVGLSGGLEGFVFYCLLIYASFWSGSSVVTFISGVVPNIMLCYMVSITYLAYCLLLSGFYVNRDRIPFYWTWFHYISILKYPYEAVLINEFDDPSRCFVRGVQVFDSTLLGGVSDSGKVKLLETLSKSLRTKITESTCLRTGSDLLAQQGITQLSKWDCLWITFASGLFFRILFYFALLFGSRNKRT.

The region spanning 73 to 325 (LNFNNLQYDV…FSDFGRPIPE (253 aa)) is the ABC transporter domain. Residue 117–124 (GASGAGKS) participates in ATP binding. The ABC transmembrane type-2 domain occupies 419–629 (FETFILAKRY…PYEAVLINEF (211 aa)). The next 7 membrane-spanning stretches (helical) occupy residues 438–458 (LVGT…TVYW), 473–493 (LFAF…PVFI), 515–535 (ISHS…FSAI), 537–557 (FWTV…LLIY), 577–597 (IMLC…LSGF), 606–626 (FYWT…AVLI), and 698–718 (LWIT…ALLF).

Belongs to the ABC transporter superfamily. ABCG family. Eye pigment precursor importer (TC 3.A.1.204) subfamily.

Its subcellular location is the vacuole membrane. In terms of biological role, confers selective resistance to kanamycin. In Arabidopsis thaliana (Mouse-ear cress), this protein is ABC transporter G family member 19 (ABCG19).